The following is a 476-amino-acid chain: 3-isopropylmalate dehydratase large subunit (476 aa).

Positions 357, 417, and 420 each coordinate [4Fe-4S] cluster.

It belongs to the aconitase/IPM isomerase family. LeuC type 1 subfamily. As to quaternary structure, heterodimer of LeuC and LeuD. [4Fe-4S] cluster serves as cofactor.

It catalyses the reaction (2R,3S)-3-isopropylmalate = (2S)-2-isopropylmalate. Its pathway is amino-acid biosynthesis; L-leucine biosynthesis; L-leucine from 3-methyl-2-oxobutanoate: step 2/4. Catalyzes the isomerization between 2-isopropylmalate and 3-isopropylmalate, via the formation of 2-isopropylmaleate. The chain is 3-isopropylmalate dehydratase large subunit from Mycolicibacterium paratuberculosis (strain ATCC BAA-968 / K-10) (Mycobacterium paratuberculosis).